We begin with the raw amino-acid sequence, 302 residues long: Mas-related G-protein coupled receptor member A3 (302 aa).

Over 1-17 (MNETIPGSIDIETLIPD) the chain is Extracellular. N-linked (GlcNAc...) asparagine glycosylation occurs at asparagine 2. A helical membrane pass occupies residues 18–38 (LMIIIFGLVGLTGNAIVFWLL). At 39–46 (GFRMHRTA) the chain is on the cytoplasmic side. A helical transmembrane segment spans residues 47-67 (FLVYILNLALADFLFLLCHII). Residue asparagine 68 is glycosylated (N-linked (GlcNAc...) asparagine). The Extracellular portion of the chain corresponds to 68-81 (NSTVDLLKFTLPKG). Residues 82–102 (IFAFCFHTIKRVLYITGLSML) traverse the membrane as a helical segment. Over 103 to 129 (SAISTERCLSVLCPIWYHCRRPEHTST) the chain is Cytoplasmic. Residues 130–150 (VMCAVIWVLSLLICILDGYFC) traverse the membrane as a helical segment. The Extracellular portion of the chain corresponds to 151–167 (GYLDNHYFNYSVCQAWD). An N-linked (GlcNAc...) asparagine glycan is attached at asparagine 159. The helical transmembrane segment at 168–188 (IFIGAYLMFLFVVLCLSTLAL) threads the bilayer. The Cytoplasmic segment spans residues 189–211 (LARLFCGARNMKFTRLFVTIMLT). Residues 212–232 (VLVFLLCGLPWGITWFLLFWI) traverse the membrane as a helical segment. Residues 233-242 (APGVFVLDYS) lie on the Extracellular side of the membrane. Residues 243 to 263 (PLLVLTAINSCANPIIYFFVG) traverse the membrane as a helical segment. At 264-302 (SFRQRLNKQTLKMVLQKALQDTPETPENMVEMSRNKAEP) the chain is on the cytoplasmic side.

Belongs to the G-protein coupled receptor 1 family. Mas subfamily. Expressed exclusively in dorsal root ganglia and nodose ganglia. Expressed in a subset of sensory neurons that includes nociceptors. Expressed in the subclass of non-peptidergic sensory neurons that are IB4(+) and VR1(-).

It is found in the cell membrane. Functionally, orphan receptor. May be a receptor for RFamide-family neuropeptides such as NPFF and NPAF, which are analgesic in vivo. May regulate nociceptor function and/or development, including the sensation or modulation of pain. Activated by the antimalarial drug chloroquine. Mediates chloroquine-induced itch, in a histamine-independent manner. The sequence is that of Mas-related G-protein coupled receptor member A3 (Mrgpra3) from Mus musculus (Mouse).